The following is a 376-amino-acid chain: Inactive 2'-5'-oligoadenylate synthase 1B (376 aa).

The Cytoplasmic portion of the chain corresponds to 1–351 (MEQDLRSIPA…VPTEVGVPMK (351 aa)). The helical; Anchor for type IV membrane protein transmembrane segment at 352–370 (YLLCRIFWLLFWSLFHFIF) threads the bilayer. Over 371–376 (GKTSSG) the chain is Extracellular.

Belongs to the 2-5A synthase family. In terms of assembly, interacts with OSBPL1A and ABCF3. As to expression, highly expressed in lung, spleen and thymus. Also detected at lower levels in heart, kidney, liver, lung, skeletal muscle, testes, uterus and ovaries.

The protein resides in the endoplasmic reticulum membrane. In terms of biological role, does not have 2'-5'-OAS activity, but can bind double-stranded RNA. The full-length protein displays antiviral activity against flaviviruses such as west Nile virus (WNV) via an alternative antiviral pathway independent of RNase L. The truncated form of the protein lacks antiviral activity. The protein is Inactive 2'-5'-oligoadenylate synthase 1B (Oas1b) of Mus musculus (Mouse).